A 117-amino-acid polypeptide reads, in one-letter code: Venom nerve growth factor (117 aa).

Intrachain disulfides connect C12–C77, C55–C105, and C65–C107. N-linked (GlcNAc...) asparagine glycosylation occurs at N21.

It belongs to the NGF-beta family. Homodimer; non-covalently linked. In terms of tissue distribution, expressed by the venom gland.

It is found in the secreted. Nerve growth factor is important for the development and maintenance of the sympathetic and sensory nervous systems. It stimulates division and differentiation of sympathetic and embryonic sensory neurons as well as basal forebrain cholinergic neurons in the brain. Its relevance in the snake venom is not clear. However, it has been shown to inhibit metalloproteinase-dependent proteolysis of platelet glycoprotein Ib alpha, suggesting a metalloproteinase inhibition to prevent metalloprotease autodigestion and/or protection against prey proteases. Binds a lipid between the two protein chains in the homodimer. The lipid-bound form promotes histamine relase from mouse mast cells, contrary to the lipid-free form. In Daboia russelii (Russel's viper), this protein is Venom nerve growth factor.